We begin with the raw amino-acid sequence, 518 residues long: Zinc finger protein 449 (518 aa).

The SCAN box domain occupies 30 to 112 (RQRFRQFQYR…SLIEDLQREL (83 aa)). A compositionally biased stretch (polar residues) spans 292–304 (NPTLGETPENSNL). Residues 292 to 325 (NPTLGETPENSNLEEPLNPKPHKKKSPGEKPHRC) form a disordered region. 7 C2H2-type zinc fingers span residues 323–345 (HRCP…QRIH), 351–373 (HKCP…QRLH), 379–401 (YECT…QRTH), 407–429 (YKCL…LKTH), 435–457 (HRCH…QRTH), 463–485 (FKCN…LRIH), and 491–513 (YKCT…QVTH).

It belongs to the krueppel C2H2-type zinc-finger protein family.

It localises to the nucleus. May be involved in transcriptional regulation. The polypeptide is Zinc finger protein 449 (ZNF449) (Pan troglodytes (Chimpanzee)).